The primary structure comprises 269 residues: Shikimate dehydrogenase (NADP(+)) (269 aa).

Residues 15–17 (SLS) and T62 contribute to the shikimate site. The Proton acceptor role is filled by K66. Shikimate contacts are provided by N86 and D100. NADP(+)-binding positions include 124-128 (GAGGA), 147-152 (NRTPER), and I211. Y213 contributes to the shikimate binding site. An NADP(+)-binding site is contributed by G234.

The protein belongs to the shikimate dehydrogenase family. In terms of assembly, homodimer.

It catalyses the reaction shikimate + NADP(+) = 3-dehydroshikimate + NADPH + H(+). It functions in the pathway metabolic intermediate biosynthesis; chorismate biosynthesis; chorismate from D-erythrose 4-phosphate and phosphoenolpyruvate: step 4/7. Involved in the biosynthesis of the chorismate, which leads to the biosynthesis of aromatic amino acids. Catalyzes the reversible NADPH linked reduction of 3-dehydroshikimate (DHSA) to yield shikimate (SA). This is Shikimate dehydrogenase (NADP(+)) from Methanococcoides burtonii (strain DSM 6242 / NBRC 107633 / OCM 468 / ACE-M).